Here is a 90-residue protein sequence, read N- to C-terminus: DNA-binding protein HU-beta (90 aa).

The protein belongs to the bacterial histone-like protein family. In terms of assembly, heterodimer of an alpha and a beta chain.

Histone-like DNA-binding protein which is capable of wrapping DNA to stabilize it, and thus to prevent its denaturation under extreme environmental conditions. This is DNA-binding protein HU-beta (hupB) from Serratia marcescens.